The following is a 174-amino-acid chain: UPF0340 protein SH0921 (174 aa).

Belongs to the UPF0340 family.

This Staphylococcus haemolyticus (strain JCSC1435) protein is UPF0340 protein SH0921.